The primary structure comprises 348 residues: Trans-L-3-hydroxyproline dehydratase (348 aa).

The active-site Proton acceptor is Cys101. Residues 102–103 (GH), Asp263, and 268–269 (GS) each bind substrate.

Belongs to the proline racemase family. In terms of assembly, homodimer.

The enzyme catalyses trans-3-hydroxy-L-proline = 1-pyrroline-2-carboxylate + H2O. Functionally, catalyzes the dehydration of trans-3-hydroxy-L-proline to delta-1-pyrroline-2-carboxylate (Pyr2C). In Xenopus tropicalis (Western clawed frog), this protein is Trans-L-3-hydroxyproline dehydratase (l3hypdh).